A 220-amino-acid polypeptide reads, in one-letter code: Dual specificity protein phosphatase 19 (220 aa).

Residue methionine 1 is modified to N-acetylmethionine. The Tyrosine-protein phosphatase domain occupies 64–205 (QVGVIKPWLL…LRTYQVGKES (142 aa)). Catalysis depends on cysteine 149, which acts as the Phosphocysteine intermediate.

It belongs to the protein-tyrosine phosphatase family. Non-receptor class dual specificity subfamily.

It carries out the reaction O-phospho-L-tyrosyl-[protein] + H2O = L-tyrosyl-[protein] + phosphate. The catalysed reaction is O-phospho-L-seryl-[protein] + H2O = L-seryl-[protein] + phosphate. The enzyme catalyses O-phospho-L-threonyl-[protein] + H2O = L-threonyl-[protein] + phosphate. Its activity is regulated as follows. Phosphatase activity is enhanced by Ca(2+) and Mn(2+). Functionally, has a dual specificity toward Ser/Thr and Tyr-containing proteins. This chain is Dual specificity protein phosphatase 19, found in Mus musculus (Mouse).